A 475-amino-acid polypeptide reads, in one-letter code: Aspartyl/glutamyl-tRNA(Asn/Gln) amidotransferase subunit B (475 aa).

This sequence belongs to the GatB/GatE family. GatB subfamily. In terms of assembly, heterotrimer of A, B and C subunits.

The enzyme catalyses L-glutamyl-tRNA(Gln) + L-glutamine + ATP + H2O = L-glutaminyl-tRNA(Gln) + L-glutamate + ADP + phosphate + H(+). It carries out the reaction L-aspartyl-tRNA(Asn) + L-glutamine + ATP + H2O = L-asparaginyl-tRNA(Asn) + L-glutamate + ADP + phosphate + 2 H(+). In terms of biological role, allows the formation of correctly charged Asn-tRNA(Asn) or Gln-tRNA(Gln) through the transamidation of misacylated Asp-tRNA(Asn) or Glu-tRNA(Gln) in organisms which lack either or both of asparaginyl-tRNA or glutaminyl-tRNA synthetases. The reaction takes place in the presence of glutamine and ATP through an activated phospho-Asp-tRNA(Asn) or phospho-Glu-tRNA(Gln). The chain is Aspartyl/glutamyl-tRNA(Asn/Gln) amidotransferase subunit B from Staphylococcus aureus (strain MRSA252).